An 80-amino-acid chain; its full sequence is Putative antitoxin VapB44 (80 aa).

The tract at residues 40-68 (NQNPQPAASQEDAFHGFEPLPHRGGAVSN) is disordered.

Its function is as follows. Possibly the antitoxin component of a type II toxin-antitoxin (TA) system. Its cognate toxin is VapC44 (Potential). The sequence is that of Putative antitoxin VapB44 (vapB44) from Mycobacterium tuberculosis (strain CDC 1551 / Oshkosh).